The sequence spans 475 residues: Ribulose bisphosphate carboxylase large chain (475 aa).

The propeptide occupies 1–2 (MS). Proline 3 carries the post-translational modification N-acetylproline. Position 14 is an N6,N6,N6-trimethyllysine (lysine 14). Residues asparagine 123 and threonine 173 each coordinate substrate. Lysine 175 functions as the Proton acceptor in the catalytic mechanism. Lysine 177 provides a ligand contact to substrate. 3 residues coordinate Mg(2+): lysine 201, aspartate 203, and glutamate 204. An N6-carboxylysine modification is found at lysine 201. Histidine 294 acts as the Proton acceptor in catalysis. Residues arginine 295, histidine 327, and serine 379 each contribute to the substrate site.

The protein belongs to the RuBisCO large chain family. Type I subfamily. Heterohexadecamer of 8 large chains and 8 small chains; disulfide-linked. The disulfide link is formed within the large subunit homodimers. Mg(2+) serves as cofactor. The disulfide bond which can form in the large chain dimeric partners within the hexadecamer appears to be associated with oxidative stress and protein turnover.

Its subcellular location is the plastid. The protein resides in the chloroplast. The enzyme catalyses 2 (2R)-3-phosphoglycerate + 2 H(+) = D-ribulose 1,5-bisphosphate + CO2 + H2O. The catalysed reaction is D-ribulose 1,5-bisphosphate + O2 = 2-phosphoglycolate + (2R)-3-phosphoglycerate + 2 H(+). In terms of biological role, ruBisCO catalyzes two reactions: the carboxylation of D-ribulose 1,5-bisphosphate, the primary event in carbon dioxide fixation, as well as the oxidative fragmentation of the pentose substrate in the photorespiration process. Both reactions occur simultaneously and in competition at the same active site. This Plumbago auriculata (Cape leadwort) protein is Ribulose bisphosphate carboxylase large chain.